The following is a 467-amino-acid chain: Probable receptor-like protein kinase At3g17420 (467 aa).

The N-terminal stretch at 1–35 (MTSQLKRTLTKRYGVLELWEIIVIALFAAFIVILV) is a signal peptide. Over 36–123 (LSVWLSFRKK…LPPSTPSTTA (88 aa)) the chain is Extracellular. The N-linked (GlcNAc...) asparagine glycan is linked to asparagine 50. Serine 70 is modified (phosphoserine). N-linked (GlcNAc...) asparagine glycosylation is present at asparagine 79. Residues 102-126 (GSLEKKPLVGSHLPPSTPSTTAPSP) form a disordered region. The helical transmembrane segment at 124–144 (PSPLLGLPEVSHIGWGHWFTL) threads the bilayer. Residues 145–467 (RDLQLATNHF…DNDITTDAKI (323 aa)) are Cytoplasmic-facing. The region spanning 154–433 (FSKESIIGDG…MLESDEYPVM (280 aa)) is the Protein kinase domain. ATP contacts are provided by residues 160-168 (IGDGGYGVV) and lysine 182. Phosphotyrosine is present on tyrosine 227. Aspartate 280 (proton acceptor) is an active-site residue. Phosphoserine occurs at positions 284 and 313. Residues threonine 314 and threonine 319 each carry the phosphothreonine modification. The residue at position 327 (tyrosine 327) is a Phosphotyrosine. The interval 413–467 (DKRPKMSQVARMLESDEYPVMPREERRRRRNQNAETHRESTDTNKDNDITTDAKI) is disordered. Residues 447-467 (ETHRESTDTNKDNDITTDAKI) show a composition bias toward basic and acidic residues.

The protein belongs to the protein kinase superfamily. Ser/Thr protein kinase family.

It localises to the cell membrane. The catalysed reaction is L-seryl-[protein] + ATP = O-phospho-L-seryl-[protein] + ADP + H(+). It carries out the reaction L-threonyl-[protein] + ATP = O-phospho-L-threonyl-[protein] + ADP + H(+). This is Probable receptor-like protein kinase At3g17420 from Arabidopsis thaliana (Mouse-ear cress).